The following is a 4116-amino-acid chain: Dynein axonemal heavy chain 3 (4116 aa).

2 disordered regions span residues 1 to 68 (MGAT…ANEE) and 137 to 172 (VPRD…KEDS). The segment at 1 to 1390 (MGATGRLELT…QVQIITTEAL (1390 aa)) is stem. The span at 145–156 (GLPSSGNRSSSE) shows a compositional bias: polar residues. Residues 785–852 (DLIKRCSEFE…NKEEELLEKE (68 aa)) are a coiled coil. AAA stretches follow at residues 1391 to 1612 (YGYE…VLTA), 1672 to 1903 (KVLN…LHCK), 2036 to 2284 (KVPA…VIQG), and 2395 to 2646 (EFNN…LRRH). Residues 1429 to 1436 (GPAGTGKT), 1710 to 1717 (GDPMGGKT), 2074 to 2081 (GPTGTGKS), and 2434 to 2441 (GIGGSGRQ) each bind ATP. The segment at 2661–2960 (FKTLLNSKRQ…KDLEENIEIC (300 aa)) is stalk. 2 AAA regions span residues 3045–3275 (LGDP…EISE) and 3488–3712 (VREF…QIQM).

It belongs to the dynein heavy chain family. In terms of assembly, consists of at least two heavy chains and a number of intermediate and light chains. As to expression, expressed primarily in trachea and testis, 2 tissues containing axonemal structures. Also expressed in lung.

Its subcellular location is the cytoplasm. It is found in the cytoskeleton. The protein localises to the cilium axoneme. Functionally, force generating protein of respiratory cilia. Produces force towards the minus ends of microtubules. Dynein has ATPase activity; the force-producing power stroke is thought to occur on release of ADP. Involved in sperm motility; implicated in sperm flagellar assembly. This Homo sapiens (Human) protein is Dynein axonemal heavy chain 3 (DNAH3).